We begin with the raw amino-acid sequence, 284 residues long: MTKPDLASLEKTIEKAFDERDGINTATRGEVREAVEQSLILLDRGEVRVAEKQADGNWHVNQWLKKAVLLSFRLNPMEVIKGGPGQSSWWDKVPSKFDGWTANEFEKAGFRAVPNCIVRHSAYIAPNAILMPSFVNLGAYVDKGAMIDTWATVGSCAQIGKNVHLSGGVGIGGVLEPMQAGPTIIEDNCFIGARSEVVEGCIVREGSVLGMGVFIGKSTKIVDRATGEVFYGEVPPYSVVVAGTMPGKNVPGENWGPSLYCAVIVKRADEKTRSKTSINELLRD.

This sequence belongs to the transferase hexapeptide repeat family.

It localises to the cytoplasm. The catalysed reaction is (S)-2,3,4,5-tetrahydrodipicolinate + succinyl-CoA + H2O = (S)-2-succinylamino-6-oxoheptanedioate + CoA. Its pathway is amino-acid biosynthesis; L-lysine biosynthesis via DAP pathway; LL-2,6-diaminopimelate from (S)-tetrahydrodipicolinate (succinylase route): step 1/3. This chain is 2,3,4,5-tetrahydropyridine-2,6-dicarboxylate N-succinyltransferase, found in Brucella abortus (strain S19).